We begin with the raw amino-acid sequence, 688 residues long: Potassium-transporting ATPase ATP-binding subunit (688 aa).

The next 4 membrane-spanning stretches (helical) occupy residues 34–54 (PVMF…LAIL), 62–82 (ALFT…ANFA), 219–239 (VALT…TATL), and 260–280 (VLVA…LSAI). The 4-aspartylphosphate intermediate role is filled by D313. ATP contacts are provided by residues D350, E354, 383–390 (FSAQTRMS), and K401. Mg(2+) contacts are provided by D524 and D528. The next 3 membrane-spanning stretches (helical) occupy residues 594–614 (FAII…LNVM), 622–642 (AILS…PLAL), and 667–687 (GLLV…ALIM).

The protein belongs to the cation transport ATPase (P-type) (TC 3.A.3) family. Type IA subfamily. In terms of assembly, the system is composed of three essential subunits: KdpA, KdpB and KdpC.

The protein localises to the cell inner membrane. The catalysed reaction is K(+)(out) + ATP + H2O = K(+)(in) + ADP + phosphate + H(+). Its function is as follows. Part of the high-affinity ATP-driven potassium transport (or Kdp) system, which catalyzes the hydrolysis of ATP coupled with the electrogenic transport of potassium into the cytoplasm. This subunit is responsible for energy coupling to the transport system and for the release of the potassium ions to the cytoplasm. This chain is Potassium-transporting ATPase ATP-binding subunit, found in Yersinia enterocolitica serotype O:8 / biotype 1B (strain NCTC 13174 / 8081).